An 87-amino-acid chain; its full sequence is Large ribosomal subunit protein bL27 (87 aa).

Belongs to the bacterial ribosomal protein bL27 family.

This Dichelobacter nodosus (strain VCS1703A) protein is Large ribosomal subunit protein bL27.